Consider the following 1024-residue polypeptide: RNA cytidine acetyltransferase (1024 aa).

Gly287 to Leu296 serves as a coordination point for ATP. The residue at position 426 (Lys426) is an N6-acetyllysine. Arg470 serves as a coordination point for ATP. An N-acetyltransferase domain is found at Cys558–Ala753. Residues Ile629–Val631 and Gln636–Ser642 contribute to the acetyl-CoA site. The tract at residues Pro702 to Lys1024 is required for localization to the nucleolus and midbody. Phosphothreonine is present on Thr716. Arg725 provides a ligand contact to acetyl-CoA. A phosphoserine mark is found at Ser934, Ser984, and Ser987. The interval Ser990–Lys1024 is disordered. The span at Ser1005–Lys1024 shows a compositional bias: basic residues.

The protein belongs to the RNA cytidine acetyltransferase family. NAT10 subfamily. As to quaternary structure, part of the small subunit (SSU) processome, composed of more than 70 proteins and the RNA chaperone small nucleolar RNA (snoRNA) U3. Interacts with THUMPD1. Interacts with SUN1 (via N-terminus). Interacts with TERT.

It localises to the nucleus. The protein localises to the nucleolus. It catalyses the reaction a cytidine in 18S rRNA + acetyl-CoA + ATP + H2O = an N(4)-acetylcytidine in 18S rRNA + ADP + phosphate + CoA + H(+). It carries out the reaction a cytidine in tRNA + acetyl-CoA + ATP + H2O = an N(4)-acetylcytidine in tRNA + ADP + phosphate + CoA + H(+). The catalysed reaction is a cytidine in mRNA + acetyl-CoA + ATP + H2O = an N(4)-acetylcytidine in mRNA + ADP + phosphate + CoA + H(+). RNA cytidine acetyltransferase that catalyzes the formation of N(4)-acetylcytidine (ac4C) modification on mRNAs, 18S rRNA and tRNAs. Catalyzes ac4C modification of a broad range of mRNAs, enhancing mRNA stability and translation. mRNA ac4C modification is frequently present within wobble cytidine sites and promotes translation efficiency. Mediates the formation of ac4C at position 1842 in 18S rRNA. May also catalyze the formation of ac4C at position 1337 in 18S rRNA. Required for early nucleolar cleavages of precursor rRNA at sites A0, A1 and A2 during 18S rRNA synthesis. Catalyzes the formation of ac4C in serine and leucine tRNAs. Requires the tRNA-binding adapter protein THUMPD1 for full tRNA acetyltransferase activity but not for 18S rRNA acetylation. In addition to RNA acetyltransferase activity, also able to acetylate lysine residues of proteins, such as histones, microtubules, p53/TP53 and MDM2, in vitro. The relevance of the protein lysine acetyltransferase activity is however unsure in vivo. Activates telomerase activity by stimulating the transcription of TERT, and may also regulate telomerase function by affecting the balance of telomerase subunit assembly, disassembly, and localization. Involved in the regulation of centrosome duplication by acetylating CENATAC during mitosis, promoting SASS6 proteasome degradation. Part of the small subunit (SSU) processome, first precursor of the small eukaryotic ribosomal subunit. During the assembly of the SSU processome in the nucleolus, many ribosome biogenesis factors, an RNA chaperone and ribosomal proteins associate with the nascent pre-rRNA and work in concert to generate RNA folding, modifications, rearrangements and cleavage as well as targeted degradation of pre-ribosomal RNA by the RNA exosome. The protein is RNA cytidine acetyltransferase of Mus musculus (Mouse).